The following is a 537-amino-acid chain: Synaptotagmin-2 (537 aa).

The Cytoplasmic portion of the chain corresponds to 1–2 (MG). The chain crosses the membrane as a helical span at residues 3 to 23 (IISTILGVIGFGFGTTIGIVI). Residues 24-537 (GYYLFIYFQS…QIELQWRNSS (514 aa)) lie on the Lumenal side of the membrane. Residues 67–249 (DFDRIDWLNK…WPKTLNVQIM (183 aa)) form the SMP-LTD domain. The phospholipid binding stretch occupies residues 227 to 505 (QEIIKDQVAN…TLGYVVINLG (279 aa)). 2 consecutive C2 domains span residues 240–362 (WPKT…LMTL) and 402–517 (DPNA…NDKY). 4 residues coordinate Ca(2+): D276, D282, D332, and E334.

It belongs to the synaptotagmin family. Ca(2+) is required as a cofactor.

It is found in the golgi apparatus membrane. In terms of biological role, may play an important role in regulating an unconventional protein trafficking from the cytosol to the extracellular matrix. This chain is Synaptotagmin-2 (SYT2), found in Arabidopsis thaliana (Mouse-ear cress).